Reading from the N-terminus, the 558-residue chain is SPATS2-like protein (558 aa).

Position 2 is an N-acetylalanine (Ala-2). A compositionally biased stretch (basic residues) spans 63-79 (GKKKNNKRKRSKSKQHQ). Residues 63–204 (GKKKNNKRKR…SPVKSNAPAA (142 aa)) form a disordered region. Composition is skewed to basic and acidic residues over residues 80–92 (GNKDAKDKVERPE) and 110–142 (GCEKDSSSPDSTREKLALTPREKKISILEEPPR). Ser-120 carries the phosphoserine modification. The stretch at 279-344 (KEEAMDILTA…ARFSCDIEQL (66 aa)) forms a coiled coil. Disordered regions lie at residues 385–406 (GNFARKSSGHNKPSEGKAANPK) and 421–514 (TMPT…RQHA). The span at 421 to 433 (TMPTNKQQNGPSS) shows a compositional bias: polar residues. The span at 469–485 (HEHRRQPHNGFRPKNKG) shows a compositional bias: basic residues.

This sequence belongs to the SPATS2 family.

It is found in the cytoplasm. Its subcellular location is the nucleus. The protein localises to the nucleolus. The chain is SPATS2-like protein (Spats2l) from Mus musculus (Mouse).